Reading from the N-terminus, the 106-residue chain is Pyrimidine/purine nucleoside phosphorylase (106 aa).

It belongs to the nucleoside phosphorylase PpnP family.

The enzyme catalyses a purine D-ribonucleoside + phosphate = a purine nucleobase + alpha-D-ribose 1-phosphate. It catalyses the reaction adenosine + phosphate = alpha-D-ribose 1-phosphate + adenine. The catalysed reaction is cytidine + phosphate = cytosine + alpha-D-ribose 1-phosphate. It carries out the reaction guanosine + phosphate = alpha-D-ribose 1-phosphate + guanine. The enzyme catalyses inosine + phosphate = alpha-D-ribose 1-phosphate + hypoxanthine. It catalyses the reaction thymidine + phosphate = 2-deoxy-alpha-D-ribose 1-phosphate + thymine. The catalysed reaction is uridine + phosphate = alpha-D-ribose 1-phosphate + uracil. It carries out the reaction xanthosine + phosphate = alpha-D-ribose 1-phosphate + xanthine. Functionally, catalyzes the phosphorolysis of diverse nucleosides, yielding D-ribose 1-phosphate and the respective free bases. Can use uridine, adenosine, guanosine, cytidine, thymidine, inosine and xanthosine as substrates. Also catalyzes the reverse reactions. This Paraburkholderia xenovorans (strain LB400) protein is Pyrimidine/purine nucleoside phosphorylase.